The sequence spans 660 residues: Protein SCARECROW 2 (660 aa).

2 disordered regions span residues 1 to 33 and 190 to 286; these read MGSS…ITSL and SDPA…KQRD. The span at 192-229 shows a compositional bias: pro residues; it reads PAPPPPPPSHPALLPPDATAPPPPPTSVAALPPPPPAQ. Positions 259-272 are enriched in low complexity; that stretch reads AAAAAAAAAAAAAA. Residues 262-289 are a coiled coil; sequence AAAAAAAAAAAAKERKEEQRRKQRDEEG. Positions 273 to 286 are enriched in basic and acidic residues; the sequence is AKERKEEQRRKQRD. Residues 283 to 653 form the GRAS domain; that stretch reads KQRDEEGLHL…LCLLTASAWR (371 aa). The tract at residues 290-354 is leucine repeat I (LRI); that stretch reads LHLLTLLLQC…VSSCLGLYAP (65 aa). The LxCxE motif signature appears at 297-301; sequence LQCAE. The VHIID stretch occupies residues 373–438; that stretch reads FQVFNGISPF…GGPPRVRLTG (66 aa). The VHIID motif lies at 404-408; that stretch reads VHIID. Positions 448 to 480 are leucine repeat II (LRII); the sequence is ATGKRLSDFADTLGLPFEFCPVADKAGNLDPEK. Positions 489–576 are PFYRE; sequence VAVHWLRHSL…QQLLSREIRN (88 aa). The tract at residues 579–653 is SAW; the sequence is AVGGPARTGD…LCLLTASAWR (75 aa).

Belongs to the GRAS family.

It localises to the cytoplasm. Functionally, probable transcription factor involved in asmmetric cell division in the cortex/endodermis progenitor cell and in the process of stomata and ligule formation in leaves. This chain is Protein SCARECROW 2 (SCR2), found in Oryza sativa subsp. indica (Rice).